The sequence spans 202 residues: Holliday junction branch migration complex subunit RuvA (202 aa).

Residues 1 to 63 form a domain I region; sequence MIASLRGTVL…EDSMTLYGFT (63 aa). The segment at 64 to 142 is domain II; it reads SQDDRDMFHV…AFAPAESADL (79 aa). Residues 143-148 form a flexible linker region; sequence SSAAPA. The tract at residues 149-202 is domain III; sequence AAGPVVEDVVEALIGLGFTDKMARPVVESVVAEQPDAATPVVLRAALSQLGAKK.

This sequence belongs to the RuvA family. As to quaternary structure, homotetramer. Forms an RuvA(8)-RuvB(12)-Holliday junction (HJ) complex. HJ DNA is sandwiched between 2 RuvA tetramers; dsDNA enters through RuvA and exits via RuvB. An RuvB hexamer assembles on each DNA strand where it exits the tetramer. Each RuvB hexamer is contacted by two RuvA subunits (via domain III) on 2 adjacent RuvB subunits; this complex drives branch migration. In the full resolvosome a probable DNA-RuvA(4)-RuvB(12)-RuvC(2) complex forms which resolves the HJ.

Its subcellular location is the cytoplasm. In terms of biological role, the RuvA-RuvB-RuvC complex processes Holliday junction (HJ) DNA during genetic recombination and DNA repair, while the RuvA-RuvB complex plays an important role in the rescue of blocked DNA replication forks via replication fork reversal (RFR). RuvA specifically binds to HJ cruciform DNA, conferring on it an open structure. The RuvB hexamer acts as an ATP-dependent pump, pulling dsDNA into and through the RuvAB complex. HJ branch migration allows RuvC to scan DNA until it finds its consensus sequence, where it cleaves and resolves the cruciform DNA. The protein is Holliday junction branch migration complex subunit RuvA of Corynebacterium aurimucosum (strain ATCC 700975 / DSM 44827 / CIP 107346 / CN-1) (Corynebacterium nigricans).